The chain runs to 562 residues: MPQTQRPLYIPYSGPNLLETPLLNKGSAFSKEERAAFNLTGLLPPRYESIEEQAERAYMQYRSFETPINKHIYLRAIQDNNETLFYRLLTDHLEEMMPIIYTPTVGDACEKFSDIYRSSRGLFISYSERDQIDDILRNATKQKVKVIVVTDGERILGLGDQGIGGMGIPIGKLSLYTACGGISPAYTLPVMLDVGTNNEKLLEDPMYMGARHKRIEQDEYDEFLDKFIKAVTRRWPGVMLQFEDFAQPNAMPLLRRYRDEVCCFNDDIQGTASVTVGTLLAACRQKGKKLSEQKVVFVGAGSAGCGIAEQIMIQMTAEGLTEEQAKRQIFMVDRFGLVMDTMDGLRDFQQALAQKTSDLNAWEYSGEYPSLLDVMHCAEPDILIGVSGQAGLFTEQVISTMAKNVERPIIFPLSNPSKHVEAHPADVLKWSEGKAIVATGSPFGEVEYDGRIYPIAQCNNSYIFPGIGLGVLSVKSERVSDEMLRVASKTLANASPSANGKGEALLPAFNDLTQLSKDIAFAVGKVAQQEGLALEIDDDTLRERIDNNFWKPEYRFYKRVSI.

The active-site Proton donor is Tyr-101. Arg-154 lines the NAD(+) pocket. Lys-172 serves as the catalytic Proton acceptor. Glu-243, Asp-244, and Asp-267 together coordinate a divalent metal cation. Residues Asp-267 and Asn-415 each contribute to the NAD(+) site.

It belongs to the malic enzymes family. Homotetramer. Mg(2+) serves as cofactor. Mn(2+) is required as a cofactor.

It carries out the reaction (S)-malate + NAD(+) = pyruvate + CO2 + NADH. The enzyme catalyses oxaloacetate + H(+) = pyruvate + CO2. The sequence is that of NAD-dependent malic enzyme from Idiomarina loihiensis (strain ATCC BAA-735 / DSM 15497 / L2-TR).